A 2181-amino-acid chain; its full sequence is Non-reducing polyketide synthase subA (2181 aa).

An N-terminal acylcarrier protein transacylase domain (SAT) region spans residues 74–180 (QWVKGNSTQP…LALCCGAYID (107 aa)). A Ketosynthase family 3 (KS3) domain is found at 347–779 (QAQLLVLGPV…GTNAAMLVCQ (433 aa)). Catalysis depends on for beta-ketoacyl synthase activity residues Cys525, His661, and His702. Positions 891 to 1193 (VLAGQTGRRV…SFYPAALGEP (303 aa)) are malonyl-CoA:ACP transacylase (MAT) domain. Ser977 acts as the For acyl/malonyl transferase activity in catalysis. The interval 1269–1401 (VSLIGKTQNA…GVITLQEVYS (133 aa)) is N-terminal hotdog fold. One can recognise a PKS/mFAS DH domain in the interval 1269-1579 (VSLIGKTQNA…FQKIAISSLK (311 aa)). The tract at residues 1276-1573 (QNAGVQTVEY…TILGAKFQKI (298 aa)) is product template (PT) domain. Positions 1425–1579 (SASVVQGDFI…FQKIAISSLK (155 aa)) are C-terminal hotdog fold. Residues 1652–1673 (ISGSSRSTSSSPPSLESRSQAM) form a disordered region. Residues 1653–1670 (SGSSRSTSSSPPSLESRS) show a composition bias toward low complexity. The Carrier domain occupies 1677-1753 (EITEGAGSAL…TLFHTIFPQQ (77 aa)). Ser1713 is subject to O-(pantetheine 4'-phosphoryl)serine. The interval 1982–2164 (EFMNCLFSYN…QSGFGHVDWT (183 aa)) is methyltransferase (CMeT) domain.

The protein operates within secondary metabolite biosynthesis; terpenoid biosynthesis. In terms of biological role, non-reducing polyketide synthase; part of the gene cluster that mediates the biosynthesis of the immunosuppressants subglutinols, meroterpenoids consisting of an alpha-pyrone (4-hydroxy-5,6-dimethyl-2-pyrone) moiety attached to a decalin core fused to a five-membered cyclic ether carrying a prenylside chain. The first step of the pathway is the synthesis of the alpha-pyrone moiety by the polyketide synthase subA via condensation of one acetyl-CoA starter unit with 3 malonyl-CoA units and 2 methylations. The alpha-pyrone is then combined with geranylgeranyl pyrophosphate (GGPP) formed by the GGPP synthase subD through the action of the prenyltransferase subC to yield a linear alpha-pyrone diterpenoid. Subsequent steps in the subglutinol biosynthetic pathway involve the decalin core formation, which is thought to be initiated by the epoxidation of the C10-C11 olefin by the FAD-dependent oxidoreductase subE. The following cyclization cascade would be catalyzed by the terpene cyclase subB. Lastly, the FAD-dependent dehydrogenase subF probably catalyzes the five-membered cyclic ether formation to complete the formation of subglutinol A. Subsequent redox reactions appear to give rise to subglutinol C and D, however, it remains unclear which enzymes are responsible for these transformations. SubD may have secondary function in the conversion of the identified subglutinols to subglutinol analog 45, which seems to be the major product of the cluster. The polypeptide is Non-reducing polyketide synthase subA (Metarhizium robertsii (strain ARSEF 23 / ATCC MYA-3075) (Metarhizium anisopliae (strain ARSEF 23))).